We begin with the raw amino-acid sequence, 88 residues long: Large ribosomal subunit protein eL34 (88 aa).

The interval 41-72 (RPLNGIPRGRPNELRKLPKTKKRPERPMPNLC) is disordered.

This sequence belongs to the eukaryotic ribosomal protein eL34 family.

This Thermococcus sibiricus (strain DSM 12597 / MM 739) protein is Large ribosomal subunit protein eL34.